We begin with the raw amino-acid sequence, 317 residues long: MTILVEHFVPDSRVDEKKVIEERDNELVLDGGFVVPKSKETDAFDAPDMNFLGHSFRDYENGESERQQGVEEFYRMQHIHQTYDFVKKMRKEYGKLNKMEMSIWECCELLNNVVDESDPDLDEPQIQHLLQTAEAIRRDYPDEDWLHLTALIHDLGKVLLLPEFGGLPQWAVVGDTFPVGCTFDSANIHHKYFKGNHDINNPKYNTKNGVYTEGCGLDNVLMSWGHDDYMYLVAKKNGTTLPHAGLFIIRYHSFYPLHKAGAYTHLMNDEDRDDLKWLHVFNKYDLYSKSKVLVDVEQVKPYYISLINKYFPAKLKW.

Substrate is bound by residues arginine 57 and 115–117 (DES). 3 residues coordinate Fe cation: histidine 128, histidine 153, and aspartate 154. Substrate is bound by residues lysine 157 and 174–175 (GD). Histidine 226, histidine 252, and aspartate 285 together coordinate Fe cation. Substrate is bound at residue 252-253 (HS).

Belongs to the myo-inositol oxygenase family. It depends on Fe cation as a cofactor. As to expression, expressed mainly in roots, stems, flowers and siliques. Low expression in leaves.

It localises to the cytoplasm. It carries out the reaction myo-inositol + O2 = D-glucuronate + H2O + H(+). It functions in the pathway polyol metabolism; myo-inositol degradation into D-glucuronate; D-glucuronate from myo-inositol: step 1/1. Involved in the biosynthesis of UDP-glucuronic acid (UDP-GlcA), providing nucleotide sugars for cell-wall polymers. May be also involved in plant ascorbate biosynthesis. The polypeptide is Inositol oxygenase 2 (MIOX2) (Arabidopsis thaliana (Mouse-ear cress)).